The following is a 398-amino-acid chain: Succinate--CoA ligase [ADP-forming] subunit beta (398 aa).

In terms of domain architecture, ATP-grasp spans 9 to 254 (KALLKSFGAP…KTEEDAKEIE (246 aa)). ATP contacts are provided by residues Lys-46, 53–55 (GRG), Glu-109, Ala-112, and Glu-117. 2 residues coordinate Mg(2+): Asn-209 and Asp-223. Substrate contacts are provided by residues Asn-274 and 331-333 (GIM).

Belongs to the succinate/malate CoA ligase beta subunit family. In terms of assembly, heterotetramer of two alpha and two beta subunits. Requires Mg(2+) as cofactor.

It catalyses the reaction succinate + ATP + CoA = succinyl-CoA + ADP + phosphate. It carries out the reaction GTP + succinate + CoA = succinyl-CoA + GDP + phosphate. The protein operates within carbohydrate metabolism; tricarboxylic acid cycle; succinate from succinyl-CoA (ligase route): step 1/1. In terms of biological role, succinyl-CoA synthetase functions in the citric acid cycle (TCA), coupling the hydrolysis of succinyl-CoA to the synthesis of either ATP or GTP and thus represents the only step of substrate-level phosphorylation in the TCA. The beta subunit provides nucleotide specificity of the enzyme and binds the substrate succinate, while the binding sites for coenzyme A and phosphate are found in the alpha subunit. The chain is Succinate--CoA ligase [ADP-forming] subunit beta from Allorhizobium ampelinum (strain ATCC BAA-846 / DSM 112012 / S4) (Agrobacterium vitis (strain S4)).